A 798-amino-acid polypeptide reads, in one-letter code: Transferrin receptor protein 2 (798 aa).

At 1-81 (MEQRWGLLRR…WAAAGRKAAP (81 aa)) the chain is on the cytoplasmic side. Residues 23 to 26 (YRRV) carry the Endocytosis signal motif. Residues 82-102 (YLVLITLLIFTGAFLLGYVAF) traverse the membrane as a helical; Signal-anchor for type II membrane protein segment. Over 103-798 (RGSCQACGDS…GDVWNIDNNF (696 aa)) the chain is Extracellular. 3 N-linked (GlcNAc...) asparagine glycosylation sites follow: N235, N334, and N535.

This sequence belongs to the peptidase M28 family. M28B subfamily. As to expression, predominantly expressed in liver. Also expressed in kidney, spleen, brain, lung, heart and muscle with very low expression in kidney, muscle and heart.

Its subcellular location is the cell membrane. It is found in the cytoplasm. Functionally, mediates cellular uptake of transferrin-bound iron in a non-iron dependent manner. May be involved in iron metabolism, hepatocyte function and erythrocyte differentiation. The protein is Transferrin receptor protein 2 (Tfr2) of Mus musculus (Mouse).